The sequence spans 310 residues: GMP synthase [glutamine-hydrolyzing] subunit B (310 aa).

A GMPS ATP-PPase domain is found at methionine 1–phenylalanine 187. Serine 27–serine 33 provides a ligand contact to ATP.

As to quaternary structure, heterodimer composed of a glutamine amidotransferase subunit (A) and a GMP-binding subunit (B).

It catalyses the reaction XMP + L-glutamine + ATP + H2O = GMP + L-glutamate + AMP + diphosphate + 2 H(+). The protein operates within purine metabolism; GMP biosynthesis; GMP from XMP (L-Gln route): step 1/1. Catalyzes the synthesis of GMP from XMP. The sequence is that of GMP synthase [glutamine-hydrolyzing] subunit B (guaAB) from Thermoplasma volcanium (strain ATCC 51530 / DSM 4299 / JCM 9571 / NBRC 15438 / GSS1).